We begin with the raw amino-acid sequence, 460 residues long: Elongation factor 1-alpha (460 aa).

Residue G2 is modified to N,N,N-trimethylglycine. At K3 the chain carries N6,N6-dimethyllysine; alternate. An N6-methyllysine; alternate modification is found at K3. The tr-type G domain maps to 5–240 (KLHVNVVVIG…DAIEPPVRPS (236 aa)). A G1 region spans residues 14-21 (GHVDSGKS). Residue 14–21 (GHVDSGKS) participates in GTP binding. At K30 the chain carries N6-methyllysine. The interval 70-74 (GITID) is G2. The residue at position 79 (K79) is an N6,N6,N6-trimethyllysine. Residues 91–94 (DAPG) form a G3 region. GTP-binding positions include 91-95 (DAPGH) and 153-156 (NKMD). The G4 stretch occupies residues 153–156 (NKMD). Residues 192–194 (SGW) form a G5 region. K316 carries the N6,N6-dimethyllysine; alternate modification. K316 carries the N6-methyllysine; alternate modification. K390 is modified (N6-methyllysine).

Belongs to the TRAFAC class translation factor GTPase superfamily. Classic translation factor GTPase family. EF-Tu/EF-1A subfamily.

It localises to the cytoplasm. Functionally, this protein promotes the GTP-dependent binding of aminoacyl-tRNA to the A-site of ribosomes during protein biosynthesis. This chain is Elongation factor 1-alpha (TEF1), found in Schizophyllum commune (Split gill fungus).